The chain runs to 234 residues: Peptidase E (234 aa).

Catalysis depends on charge relay system residues Ser-123, Asp-138, and His-160.

The protein belongs to the peptidase S51 family.

It is found in the cytoplasm. The catalysed reaction is Dipeptidase E catalyzes the hydrolysis of dipeptides Asp-|-Xaa. It does not act on peptides with N-terminal Glu, Asn or Gln, nor does it cleave isoaspartyl peptides.. Functionally, hydrolyzes dipeptides containing N-terminal aspartate residues. May play a role in allowing the cell to use peptide aspartate to spare carbon otherwise required for the synthesis of the aspartate family of amino acids. The polypeptide is Peptidase E (Actinobacillus pleuropneumoniae serotype 5b (strain L20)).